The following is a 143-amino-acid chain: Large ribosomal subunit protein uL11 (143 aa).

This sequence belongs to the universal ribosomal protein uL11 family. As to quaternary structure, part of the ribosomal stalk of the 50S ribosomal subunit. Interacts with L10 and the large rRNA to form the base of the stalk. L10 forms an elongated spine to which L12 dimers bind in a sequential fashion forming a multimeric L10(L12)X complex. One or more lysine residues are methylated.

Functionally, forms part of the ribosomal stalk which helps the ribosome interact with GTP-bound translation factors. The sequence is that of Large ribosomal subunit protein uL11 from Leifsonia xyli subsp. xyli (strain CTCB07).